Consider the following 769-residue polypeptide: DNA gyrase subunit B (769 aa).

The 115-residue stretch at S414 to P528 folds into the Toprim domain. Residues E420, D493, and D495 each coordinate Mg(2+).

It belongs to the type II topoisomerase GyrB family. In terms of assembly, heterotetramer, composed of two GyrA and two GyrB chains. In the heterotetramer, GyrA contains the active site tyrosine that forms a transient covalent intermediate with DNA, while GyrB binds cofactors and catalyzes ATP hydrolysis. Requires Mg(2+) as cofactor. Mn(2+) is required as a cofactor. It depends on Ca(2+) as a cofactor.

The protein resides in the cytoplasm. It catalyses the reaction ATP-dependent breakage, passage and rejoining of double-stranded DNA.. Its function is as follows. A type II topoisomerase that negatively supercoils closed circular double-stranded (ds) DNA in an ATP-dependent manner to modulate DNA topology and maintain chromosomes in an underwound state. Negative supercoiling favors strand separation, and DNA replication, transcription, recombination and repair, all of which involve strand separation. Also able to catalyze the interconversion of other topological isomers of dsDNA rings, including catenanes and knotted rings. Type II topoisomerases break and join 2 DNA strands simultaneously in an ATP-dependent manner. The chain is DNA gyrase subunit B from Campylobacter jejuni subsp. jejuni serotype O:2 (strain ATCC 700819 / NCTC 11168).